A 923-amino-acid chain; its full sequence is Protocadherin gamma-B5 (923 aa).

Positions Met1–Cys30 are cleaved as a signal peptide. 6 consecutive Cadherin domains span residues Glu31–Phe133, Thr134–Phe242, Asn243–Val343, Thr344–Phe448, His449–Val558, and Asp566–Ile671. The Extracellular segment spans residues Glu31 to Tyr687. Residues Asn415 and Asn541 are each glycosylated (N-linked (GlcNAc...) asparagine). A helical transmembrane segment spans residues Leu688–Ala708. Topologically, residues Leu709 to Lys923 are cytoplasmic. Disordered stretches follow at residues Thr794–Asn832 and Ala893–Lys923. Residues Trp807–Asn832 show a composition bias toward polar residues. Basic residues predominate over residues Asn913–Lys923.

It is found in the cell membrane. In terms of biological role, potential calcium-dependent cell-adhesion protein. May be involved in the establishment and maintenance of specific neuronal connections in the brain. The sequence is that of Protocadherin gamma-B5 (PCDHGB5) from Pan troglodytes (Chimpanzee).